A 1037-amino-acid polypeptide reads, in one-letter code: Glycine dehydrogenase (decarboxylating) 1, mitochondrial (1037 aa).

A mitochondrion-targeting transit peptide spans 1–67; the sequence is MERARRLAYR…AFGRHQQTRS (67 aa). Position 98 is an S-glutathionyl cysteine; transient (cysteine 98). Residues cysteine 402 and cysteine 463 each carry the S-glutathionyl cysteine modification. Lysine 774 is subject to N6-(pyridoxal phosphate)lysine. Cysteine 777, cysteine 943, and cysteine 1022 each carry S-glutathionyl cysteine; transient.

The protein belongs to the GcvP family. Homodimer. The glycine cleavage system is composed of four proteins: P, T, L and H. It depends on pyridoxal 5'-phosphate as a cofactor. In terms of processing, glutathionylated at Cys-98, Cys-777, Cys-943 and Cys-1022 after S-nitrosoglutathione treatment. Post-translationally, S-nitrosylated at unknown positions by nitric oxide. In terms of tissue distribution, expressed in leaves. Detected in roots, stems, flowers and siliques.

It localises to the mitochondrion. The enzyme catalyses N(6)-[(R)-lipoyl]-L-lysyl-[glycine-cleavage complex H protein] + glycine + H(+) = N(6)-[(R)-S(8)-aminomethyldihydrolipoyl]-L-lysyl-[glycine-cleavage complex H protein] + CO2. With respect to regulation, inhibited by harpin, S-nitrosoglutathione (GSNO), nitric oxide, N-ethylmaleimide and 5,5'-dithiobis-(2-nitrobenzoic acid). Its function is as follows. The glycine decarboxylase (GDC) or glycine cleavage system catalyzes the degradation of glycine. The P protein binds the alpha-amino group of glycine through its pyridoxal phosphate cofactor; CO(2) is released and the remaining methylamine moiety is then transferred to the lipoamide cofactor of the H protein. The protein is Glycine dehydrogenase (decarboxylating) 1, mitochondrial (GLDP1) of Arabidopsis thaliana (Mouse-ear cress).